The sequence spans 461 residues: Ribitol-5-phosphate transferase FKTN (461 aa).

The Cytoplasmic segment spans residues 1 to 7 (MSRINKN). The tract at residues 6 to 27 (KNVVLALLTLTSSAFLLFQLYY) is required and sufficient for interaction with POMGNT1. Residues 8-28 (VVLALLTLTSSAFLLFQLYYY) traverse the membrane as a helical; Signal-anchor for type II membrane protein segment. The Lumenal portion of the chain corresponds to 29–461 (KHYLSARNGP…SEWDEVIQLY (433 aa)). N-linked (GlcNAc...) asparagine glycosylation is present at N92.

Belongs to the LicD transferase family. In terms of assembly, forms a complex composed of FKTN/fukutin, FKRP and RXYLT1/TMEM5. Interacts (via transmembrane domain) with POMGNT1; the interaction is direct and is required for normal POMGNT1 location in Golgi membranes. In terms of tissue distribution, expressed in the retina, with highest levels found in the inner segments of photoreceptors and the outer plexiform layer (at protein level). Expressed at lower levels in the inner and outer nuclear layers, the inner plexiform layers, and the ganglion cell layers of the retina (at protein level). Expressed in the heart, brain, spleen, lung, liver, skeletal muscle, kidney and testis.

The protein localises to the golgi apparatus membrane. It is found in the cytoplasm. The protein resides in the nucleus. It localises to the endoplasmic reticulum. It carries out the reaction 3-O-[beta-D-GalNAc-(1-&gt;3)-beta-D-GlcNAc-(1-&gt;4)-(O-6-P-alpha-D-Man)]-Thr-[protein] + CDP-L-ribitol = 3-O-[Rib-ol-P-3-beta-D-GalNAc-(1-&gt;3)-beta-D-GlcNAc-(1-&gt;4)-(O-6-P-alpha-D-Man)]-Thr-[protein] + CMP + H(+). Its pathway is protein modification; protein glycosylation. Its function is as follows. Catalyzes the transfer of CDP-ribitol to the distal N-acetylgalactosamine of the phosphorylated O-mannosyl trisaccharide (N-acetylgalactosamine-beta-3-N-acetylglucosamine-beta-4-(phosphate-6-)mannose), a carbohydrate structure present in alpha-dystroglycan (DAG1). This constitutes the first step in the formation of the ribitol 5-phosphate tandem repeat which links the phosphorylated O-mannosyl trisaccharide to the ligand binding moiety composed of repeats of 3-xylosyl-alpha-1,3-glucuronic acid-beta-1. Required for normal location of POMGNT1 in Golgi membranes, and for normal POMGNT1 activity. May interact with and reinforce a large complex encompassing the outside and inside of muscle membranes. Could be involved in brain development. This is Ribitol-5-phosphate transferase FKTN from Mus musculus (Mouse).